The following is a 278-amino-acid chain: Formyltetrahydrofolate deformylase (278 aa).

Residues I6–I85 enclose the ACT domain. D223 is an active-site residue.

It belongs to the PurU family.

It carries out the reaction (6R)-10-formyltetrahydrofolate + H2O = (6S)-5,6,7,8-tetrahydrofolate + formate + H(+). The protein operates within purine metabolism; IMP biosynthesis via de novo pathway; formate from 10-formyl-5,6,7,8-tetrahydrofolate: step 1/1. Functionally, catalyzes the hydrolysis of 10-formyltetrahydrofolate (formyl-FH4) to formate and tetrahydrofolate (FH4). The protein is Formyltetrahydrofolate deformylase of Haemophilus influenzae (strain ATCC 51907 / DSM 11121 / KW20 / Rd).